Reading from the N-terminus, the 525-residue chain is GMP synthase [glutamine-hydrolyzing] (525 aa).

Residues 9 to 207 (RILILDFGSQ…VLDICQCEAL (199 aa)) enclose the Glutamine amidotransferase type-1 domain. Residue cysteine 86 is the Nucleophile of the active site. Catalysis depends on residues histidine 181 and glutamate 183. One can recognise a GMPS ATP-PPase domain in the interval 208-400 (WTPATIIEDA…LGLPYDMLFR (193 aa)). Position 235–241 (235–241 (SGGVDSS)) interacts with ATP.

In terms of assembly, homodimer.

The catalysed reaction is XMP + L-glutamine + ATP + H2O = GMP + L-glutamate + AMP + diphosphate + 2 H(+). Its pathway is purine metabolism; GMP biosynthesis; GMP from XMP (L-Gln route): step 1/1. Functionally, catalyzes the synthesis of GMP from XMP. This Serratia proteamaculans (strain 568) protein is GMP synthase [glutamine-hydrolyzing].